A 315-amino-acid polypeptide reads, in one-letter code: Ribose-phosphate pyrophosphokinase (315 aa).

Residues 37 to 39 (DGE) and 96 to 97 (RQ) contribute to the ATP site. Residues His-131 and Asp-170 each contribute to the Mg(2+) site. Lys-194 is a catalytic residue. D-ribose 5-phosphate-binding positions include Arg-196, Asp-220, and 224–228 (DTGGT).

Belongs to the ribose-phosphate pyrophosphokinase family. Class I subfamily. As to quaternary structure, homohexamer. Mg(2+) serves as cofactor.

The protein localises to the cytoplasm. The catalysed reaction is D-ribose 5-phosphate + ATP = 5-phospho-alpha-D-ribose 1-diphosphate + AMP + H(+). It participates in metabolic intermediate biosynthesis; 5-phospho-alpha-D-ribose 1-diphosphate biosynthesis; 5-phospho-alpha-D-ribose 1-diphosphate from D-ribose 5-phosphate (route I): step 1/1. In terms of biological role, involved in the biosynthesis of the central metabolite phospho-alpha-D-ribosyl-1-pyrophosphate (PRPP) via the transfer of pyrophosphoryl group from ATP to 1-hydroxyl of ribose-5-phosphate (Rib-5-P). This chain is Ribose-phosphate pyrophosphokinase, found in Photorhabdus laumondii subsp. laumondii (strain DSM 15139 / CIP 105565 / TT01) (Photorhabdus luminescens subsp. laumondii).